The following is a 652-amino-acid chain: UvrABC system protein C (652 aa).

Residues 20–99 (PEPGCYLMRD…IKNHQPHFNV (80 aa)) form the GIY-YIG domain. The 36-residue stretch at 209–244 (DELQRLLDEQMNRYAERLDFESAARVRDQLQGLDQL) folds into the UVR domain.

This sequence belongs to the UvrC family. As to quaternary structure, interacts with UvrB in an incision complex.

It localises to the cytoplasm. Its function is as follows. The UvrABC repair system catalyzes the recognition and processing of DNA lesions. UvrC both incises the 5' and 3' sides of the lesion. The N-terminal half is responsible for the 3' incision and the C-terminal half is responsible for the 5' incision. The chain is UvrABC system protein C from Parasynechococcus marenigrum (strain WH8102).